Here is a 256-residue protein sequence, read N- to C-terminus: Matrix protein (256 aa).

It belongs to the pneumovirinae M protein family. In terms of assembly, forms dimers. Forms higher-order oligomers. Interacts with glycoprotein G (via N-terminus). Interacts with protein M2-1; this interaction directs the matrix protein localization to cytoplasmic inclusions comprising viral proteins L, N, P, and M2-1 and mediates the matrix protein association with the nucleocapsid.

Its subcellular location is the virion. The protein resides in the host cytoplasm. The protein localises to the host nucleus. It localises to the host cell membrane. In terms of biological role, plays a crucial role in virus assembly into filaments and budding. Early in infection, localizes in the nucleus where it may inhibit host cell transcription. Later in infection, traffics to the cytoplasm to associate with inclusion bodies, the site of viral transcription and replication. During virus assembly and budding, acts as a bridge between the nucleocapsid and the lipid bilayer. This chain is Matrix protein (M), found in Ovine respiratory syncytial virus (strain WSU 83-1578) (ORSV).